Here is a 157-residue protein sequence, read N- to C-terminus: Ribosome maturation factor RimP (157 aa).

Belongs to the RimP family.

The protein resides in the cytoplasm. Its function is as follows. Required for maturation of 30S ribosomal subunits. The protein is Ribosome maturation factor RimP of Bacillus licheniformis (strain ATCC 14580 / DSM 13 / JCM 2505 / CCUG 7422 / NBRC 12200 / NCIMB 9375 / NCTC 10341 / NRRL NRS-1264 / Gibson 46).